Consider the following 179-residue polypeptide: Ferric nitrobindin-like protein (179 aa).

The GXWXGXG signature appears at 17–23; it reads GRWEGLG.

It belongs to the nitrobindin family.

The sequence is that of Ferric nitrobindin-like protein from Thermobifida fusca (strain YX).